The sequence spans 261 residues: tRNA pseudouridine synthase A (261 aa).

The Nucleophile role is filled by D51. Y109 serves as a coordination point for substrate.

Belongs to the tRNA pseudouridine synthase TruA family. In terms of assembly, homodimer.

The enzyme catalyses uridine(38/39/40) in tRNA = pseudouridine(38/39/40) in tRNA. Functionally, formation of pseudouridine at positions 38, 39 and 40 in the anticodon stem and loop of transfer RNAs. This chain is tRNA pseudouridine synthase A, found in Shewanella baltica (strain OS155 / ATCC BAA-1091).